We begin with the raw amino-acid sequence, 553 residues long: Undecaprenyl phosphate-alpha-4-amino-4-deoxy-L-arabinose arabinosyl transferase (553 aa).

11 helical membrane passes run 6-26, 89-109, 115-135, 180-200, 208-228, 258-278, 293-313, 317-337, 352-372, 386-406, and 410-430; these read ACKV…LLPL, FGSV…AMMM, IAFA…IGTY, FMTK…PIVI, IVCF…PWVI, IAPF…WLGL, NPEM…FSIA, LPTY…KFGV, GMVN…MEVV, WVLA…CFAL, and YWLL…HALP.

This sequence belongs to the glycosyltransferase 83 family.

It localises to the cell inner membrane. The catalysed reaction is 4-amino-4-deoxy-alpha-L-arabinopyranosyl di-trans,octa-cis-undecaprenyl phosphate + lipid IVA = lipid IIA + di-trans,octa-cis-undecaprenyl phosphate.. The protein operates within lipopolysaccharide metabolism; 4-amino-4-deoxy-beta-L-arabinose-lipid A biosynthesis. Its function is as follows. Catalyzes the transfer of the L-Ara4N moiety of the glycolipid undecaprenyl phosphate-alpha-L-Ara4N to lipid A. The modified arabinose is attached to lipid A and is required for resistance to polymyxin and cationic antimicrobial peptides. The chain is Undecaprenyl phosphate-alpha-4-amino-4-deoxy-L-arabinose arabinosyl transferase (arnT) from Photorhabdus laumondii subsp. laumondii (strain DSM 15139 / CIP 105565 / TT01) (Photorhabdus luminescens subsp. laumondii).